We begin with the raw amino-acid sequence, 185 residues long: Peptidoglycan-recognition protein SC1a (185 aa).

Positions 1-21 (MVSKVALLLAVLVCSQYMAQG) are cleaved as a signal peptide. The N-acetylmuramoyl-L-alanine amidase domain occupies 46 to 170 (SYAIIHHTAG…RQVSATECPG (125 aa)). Zn(2+) is bound at residue His51. Cys58 and Cys64 are oxidised to a cystine. Positions 160 and 168 each coordinate Zn(2+).

Belongs to the N-acetylmuramoyl-L-alanine amidase 2 family. Zn(2+) serves as cofactor.

The protein resides in the secreted. The enzyme catalyses Hydrolyzes the link between N-acetylmuramoyl residues and L-amino acid residues in certain cell-wall glycopeptides.. In terms of biological role, N-acetylmuramyl-L-alanine amidase involved in innate immunity by degrading bacterial peptidoglycans (PGN). Plays a scavenger role by digesting biologically active PGN into biologically inactive fragments. Has no direct bacteriolytic activity. This is Peptidoglycan-recognition protein SC1a from Drosophila melanogaster (Fruit fly).